The sequence spans 248 residues: Phosphatidylserine decarboxylase proenzyme (248 aa).

Ser-206 acts as the Schiff-base intermediate with substrate; via pyruvic acid in catalysis. The residue at position 206 (Ser-206) is a Pyruvic acid (Ser); by autocatalysis.

This sequence belongs to the phosphatidylserine decarboxylase family. PSD-A subfamily. As to quaternary structure, heterodimer of a large membrane-associated beta subunit and a small pyruvoyl-containing alpha subunit. Pyruvate serves as cofactor. Is synthesized initially as an inactive proenzyme. Formation of the active enzyme involves a self-maturation process in which the active site pyruvoyl group is generated from an internal serine residue via an autocatalytic post-translational modification. Two non-identical subunits are generated from the proenzyme in this reaction, and the pyruvate is formed at the N-terminus of the alpha chain, which is derived from the carboxyl end of the proenzyme. The post-translation cleavage follows an unusual pathway, termed non-hydrolytic serinolysis, in which the side chain hydroxyl group of the serine supplies its oxygen atom to form the C-terminus of the beta chain, while the remainder of the serine residue undergoes an oxidative deamination to produce ammonia and the pyruvoyl prosthetic group on the alpha chain.

It localises to the cell membrane. The enzyme catalyses a 1,2-diacyl-sn-glycero-3-phospho-L-serine + H(+) = a 1,2-diacyl-sn-glycero-3-phosphoethanolamine + CO2. It functions in the pathway phospholipid metabolism; phosphatidylethanolamine biosynthesis; phosphatidylethanolamine from CDP-diacylglycerol: step 2/2. In terms of biological role, catalyzes the formation of phosphatidylethanolamine (PtdEtn) from phosphatidylserine (PtdSer). The chain is Phosphatidylserine decarboxylase proenzyme from Nitrobacter hamburgensis (strain DSM 10229 / NCIMB 13809 / X14).